The chain runs to 287 residues: 2-dehydro-3-deoxyphosphooctonate aldolase (287 aa).

It belongs to the KdsA family.

The protein localises to the cytoplasm. It carries out the reaction D-arabinose 5-phosphate + phosphoenolpyruvate + H2O = 3-deoxy-alpha-D-manno-2-octulosonate-8-phosphate + phosphate. The protein operates within carbohydrate biosynthesis; 3-deoxy-D-manno-octulosonate biosynthesis; 3-deoxy-D-manno-octulosonate from D-ribulose 5-phosphate: step 2/3. It functions in the pathway bacterial outer membrane biogenesis; lipopolysaccharide biosynthesis. The protein is 2-dehydro-3-deoxyphosphooctonate aldolase of Caulobacter vibrioides (strain ATCC 19089 / CIP 103742 / CB 15) (Caulobacter crescentus).